A 469-amino-acid chain; its full sequence is UDP-N-acetylmuramate--L-alanine ligase (469 aa).

Residue 119–125 coordinates ATP; that stretch reads GTHGKTT.

The protein belongs to the MurCDEF family.

The protein resides in the cytoplasm. The catalysed reaction is UDP-N-acetyl-alpha-D-muramate + L-alanine + ATP = UDP-N-acetyl-alpha-D-muramoyl-L-alanine + ADP + phosphate + H(+). Its pathway is cell wall biogenesis; peptidoglycan biosynthesis. Cell wall formation. This is UDP-N-acetylmuramate--L-alanine ligase from Ruthia magnifica subsp. Calyptogena magnifica.